A 333-amino-acid chain; its full sequence is Chitinase-like protein 2 (333 aa).

The N-terminal stretch at 1 to 27 is a signal peptide; that stretch reads MVSKPLFSLLLLTVALVVFQTGTLVNA. A disulfide bond links cysteine 50 and cysteine 56. N-linked (GlcNAc...) asparagine glycosylation occurs at asparagine 65. Cysteine 165 and cysteine 175 are disulfide-bonded. N-linked (GlcNAc...) asparagine glycans are attached at residues asparagine 216 and asparagine 252. Cysteine 275 and cysteine 313 are oxidised to a cystine. The tract at residues 307 to 333 is disordered; the sequence is PHEKLSCADQEPFSSSSSAPPSSGSSS. Residues 320 to 333 show a composition bias toward low complexity; sequence SSSSSAPPSSGSSS.

Belongs to the glycosyl hydrolase 19 family. As to expression, mostly expressed in stems, especially in xylem and interfascicular fibers.

The protein localises to the secreted. Its function is as follows. No chitinase activity. Required for proper cell wall biosynthesis in etiolated seedlings. Prevents lignin accumulation in hypocotyls. The sequence is that of Chitinase-like protein 2 (CTL2) from Arabidopsis thaliana (Mouse-ear cress).